The chain runs to 527 residues: Baeyer-Villiger monooxygenase (527 aa).

Residues serine 36, glutamate 56, 64–67 (TWRV), aspartate 76, tyrosine 82, and isoleucine 125 contribute to the FAD site. An NADP(+)-binding site is contributed by 74–76 (ACD). Residues 199 to 205 (TGASAIQ), 222 to 223 (RT), and 308 to 309 (KR) each bind NADP(+). Methionine 415 provides a ligand contact to FAD.

Belongs to the FAD-binding monooxygenase family. FAD is required as a cofactor.

Functionally, catalyzes a Baeyer-Villiger oxidation reaction, i.e. the insertion of an oxygen atom into a carbon-carbon bond adjacent to a carbonyl, which converts ketones to esters or lactones using NADPH and/or NADH as an electron donor. Thus, can convert bicyclo[3.2.0]hept-2-en-6-one into the oxidative lactone products 2-oxabicyclo[3.3.0]oct-6-en-3-one and 3-oxabicyclo[3.3.0]oct-6-en-2-one. Is also able to catalyze the sulfoxidation of methyl phenyl sulfide (thioanisole). The protein is Baeyer-Villiger monooxygenase of Pseudomonas aeruginosa (strain ATCC 15692 / DSM 22644 / CIP 104116 / JCM 14847 / LMG 12228 / 1C / PRS 101 / PAO1).